A 208-amino-acid polypeptide reads, in one-letter code: MVLSGKDLAAHRKEEILFQGLSFCLFPHQLMTITGPNGIGKSTLLRIIVGLFEAAEGHVSLKDHEQTYPVATACHYLGPQNAMKPFLSVIDNLQFWSAFYGQYLRSPHEALADMGLSDLAPLPFNVLSTGQKRCVAIARLLLSYRPIWILDEPISGLDSHAQTLLANLFQRHLNQGGMIIAATHSPFGIPENHKIALEKFVPSQERRE.

The ABC transporter domain occupies 3-206 (LSGKDLAAHR…LEKFVPSQER (204 aa)). Position 35–42 (35–42 (GPNGIGKS)) interacts with ATP.

This sequence belongs to the ABC transporter superfamily. CcmA exporter (TC 3.A.1.107) family. As to quaternary structure, the complex is composed of two ATP-binding proteins (CcmA) and two transmembrane proteins (CcmB).

Its subcellular location is the cell inner membrane. It catalyses the reaction heme b(in) + ATP + H2O = heme b(out) + ADP + phosphate + H(+). Its function is as follows. Part of the ABC transporter complex CcmAB involved in the biogenesis of c-type cytochromes; once thought to export heme, this seems not to be the case, but its exact role is uncertain. Responsible for energy coupling to the transport system. The protein is Cytochrome c biogenesis ATP-binding export protein CcmA of Bartonella quintana (strain Toulouse) (Rochalimaea quintana).